A 147-amino-acid polypeptide reads, in one-letter code: Large ribosomal subunit protein uL15 (147 aa).

Residues 1 to 28 show a composition bias toward basic residues; sequence MIRRRKKVRKLRGSHTHGWGCKKKHRGG. The tract at residues 1 to 43 is disordered; the sequence is MIRRRKKVRKLRGSHTHGWGCKKKHRGGGSKGGRGMAGTGKRN. Positions 29–38 are enriched in gly residues; that stretch reads GSKGGRGMAG.

This sequence belongs to the universal ribosomal protein uL15 family. Part of the 50S ribosomal subunit.

Functionally, binds to the 23S rRNA. The chain is Large ribosomal subunit protein uL15 from Pyrococcus furiosus (strain ATCC 43587 / DSM 3638 / JCM 8422 / Vc1).